The primary structure comprises 504 residues: MWVLYLPAVLSVLIVTLYLYFTRTFNYWKKRNVRGPEPTVFFGNLKDSTLRKKNIGIVMEEIYNQFPYEKVVGMYRMTTPCLLVRDFHVIKHIMIKDFEAFRDRGVEFSKEGLGQNLFHADGETWRALRNRFTPIFTSGKLKNMFYLMHEGADNFIDHVSKECEKKQEFEVHSLLQTYTMSTISSCAFGVSYNSISDKVQTLEIVDKIISEPSYAIELDYMYPKLLAKLNLSIIPTPVQHFFKSLVDNIISQRNGKPAGRNDFMDLILELRQMGEVTSNKYLDGVTSLEITDEVICAQAFVFYVAGYETSATTMSYLIYQLSLNQDVQNKLIAEVDEAIKASDGKVTYDTVKEMKYLNKVFDETLRMYSIVEPLQRKATRDYQIPGTDVVIEKDTMVLISPRGIHYDPKYYDNPKQFNPDRFDAEEVGKRHPCAYLPFGLGQRNCIGMRFGRLQSLLCITKILSKFRIEPSKNTDRNLQVEPRRVTIGPKGGIRVNIVPRKIVS.

Cys-445 provides a ligand contact to heme.

This sequence belongs to the cytochrome P450 family. It depends on heme as a cofactor.

It localises to the endoplasmic reticulum membrane. Its subcellular location is the microsome membrane. It catalyses the reaction an organic molecule + reduced [NADPH--hemoprotein reductase] + O2 = an alcohol + oxidized [NADPH--hemoprotein reductase] + H2O + H(+). The chain is Cytochrome P450 6B7 (CYP6B7) from Helicoverpa armigera (Cotton bollworm).